The sequence spans 72 residues: Gene 35 protein (72 aa).

The polypeptide is Gene 35 protein (35) (Mycobacterium phage L5 (Mycobacteriophage L5)).